The chain runs to 252 residues: NAD(P)H-quinone oxidoreductase subunit K (252 aa).

Positions 73, 74, 138, and 169 each coordinate [4Fe-4S] cluster. A compositionally biased stretch (polar residues) spans 225 to 236 (ASTQKQALSPSQ). The tract at residues 225 to 252 (ASTQKQALSPSQEIPLEDQNEATKEIAQ) is disordered.

Belongs to the complex I 20 kDa subunit family. As to quaternary structure, NDH-1 can be composed of about 15 different subunits; different subcomplexes with different compositions have been identified which probably have different functions. [4Fe-4S] cluster serves as cofactor.

Its subcellular location is the cellular thylakoid membrane. The enzyme catalyses a plastoquinone + NADH + (n+1) H(+)(in) = a plastoquinol + NAD(+) + n H(+)(out). It carries out the reaction a plastoquinone + NADPH + (n+1) H(+)(in) = a plastoquinol + NADP(+) + n H(+)(out). NDH-1 shuttles electrons from an unknown electron donor, via FMN and iron-sulfur (Fe-S) centers, to quinones in the respiratory and/or the photosynthetic chain. The immediate electron acceptor for the enzyme in this species is believed to be plastoquinone. Couples the redox reaction to proton translocation, and thus conserves the redox energy in a proton gradient. Cyanobacterial NDH-1 also plays a role in inorganic carbon-concentration. The polypeptide is NAD(P)H-quinone oxidoreductase subunit K (Prochlorococcus marinus (strain MIT 9211)).